The primary structure comprises 913 residues: MTDNNDDKTLNAPAKKTLTLKPGGMNQGTVRQDMGRGRTNAVVVETRKRRPHRPEDEKPVQPVVAAPKPAAPAPVAARPQAPQPRIHQPGGQQQRPGSSQSQQRSGSSAPQQRQADRPRGNVLHDLSAGEMEARRRALMEAQARDVVEAKQRAEDEARRKVEEEQRIAAEKMEAANRAAEEAAAAKVAASQPAAEVRAEPASERPAAAAAPAPRTDARPQSAAAAPRSAPATPDAAAPRGRRTGGDDEDDRGAVRRGSSLPARGKVVAPAPAKPAARLKTEEERRRGKLTVTSNLEEDGTPRGRSMASMRRRQEKFRRSQMQETREKVLREVILPETITIQELSQRMSERAVDVIKFLMKEGQMLKPGDVIDADLAELIAVEFGHTVKRVSESDVEEGIFNQTDDEGEMVSRPPVVTIMGHVDHGKTSLLDAIRQANVVSGEAGGITQHIGAYQVEKNGHKITFIDTPGHAAFTAMRARGAQATDIAVLVVAADDSVMPQTIESINHAKAAGVPIVVAINKIDKHEANPDKVRQQLLQHEVFVESMGGEVLDVEVSAKNKLNLDKLLEAILLQAEILDLKADPSRTAEGTVIEAELDRGRGAVATVLVQKGTLKPGQIIVAGDQWGRVRALVNDKGDHVKEAGPAMPVEILGLSGTPSAGDRFAVVENESRAREISEYRQRLARDKAVARQTGQRGSLEQMMSQLQTSGLKEFPLVIKADVQGSVEAIIASLDKLGTDEVRARVVHSGAGAITESDISLAEASNAAIIGFNVRANAQARTASERAGIEIRYYNIIYDLVDDVKAAMSGLLSPERRETFLGNAEILEVFNITKVGKVAGCRVVEGKVERGAGVRLVRDNVVIHEGKLKTLKRFKDEVNEVPVGQECGMAFENYEDIRAGDTIECFRVEHITRTL.

The disordered stretch occupies residues 1–322 (MTDNNDDKTL…QEKFRRSQMQ (322 aa)). The segment covering 60 to 113 (VQPVVAAPKPAAPAPVAARPQAPQPRIHQPGGQQQRPGSSQSQQRSGSSAPQQR) has biased composition (low complexity). Basic and acidic residues predominate over residues 131-180 (MEARRRALMEAQARDVVEAKQRAEDEARRKVEEEQRIAAEKMEAANRAAE). Low complexity-rich tracts occupy residues 181–195 (EAAA…PAAE), 203–238 (ERPA…AAAP), and 261–277 (PARG…PAAR). A tr-type G domain is found at 411-578 (SRPPVVTIMG…AILLQAEILD (168 aa)). Positions 420-427 (GHVDHGKT) are G1. 420–427 (GHVDHGKT) is a GTP binding site. The tract at residues 445–449 (GITQH) is G2. The G3 stretch occupies residues 466 to 469 (DTPG). Residues 466 to 470 (DTPGH) and 520 to 523 (NKID) each bind GTP. Residues 520–523 (NKID) are G4. The interval 556–558 (SAK) is G5.

Belongs to the TRAFAC class translation factor GTPase superfamily. Classic translation factor GTPase family. IF-2 subfamily.

It is found in the cytoplasm. Its function is as follows. One of the essential components for the initiation of protein synthesis. Protects formylmethionyl-tRNA from spontaneous hydrolysis and promotes its binding to the 30S ribosomal subunits. Also involved in the hydrolysis of GTP during the formation of the 70S ribosomal complex. The polypeptide is Translation initiation factor IF-2 (Agrobacterium fabrum (strain C58 / ATCC 33970) (Agrobacterium tumefaciens (strain C58))).